The chain runs to 182 residues: ATP-dependent protease subunit HslV (182 aa).

Threonine 12 is an active-site residue. Alanine 167, cysteine 170, and threonine 173 together coordinate Na(+).

It belongs to the peptidase T1B family. HslV subfamily. As to quaternary structure, a double ring-shaped homohexamer of HslV is capped on each side by a ring-shaped HslU homohexamer. The assembly of the HslU/HslV complex is dependent on binding of ATP.

The protein resides in the cytoplasm. The enzyme catalyses ATP-dependent cleavage of peptide bonds with broad specificity.. Its activity is regulated as follows. Allosterically activated by HslU binding. In terms of biological role, protease subunit of a proteasome-like degradation complex believed to be a general protein degrading machinery. This chain is ATP-dependent protease subunit HslV, found in Chlorobium phaeobacteroides (strain DSM 266 / SMG 266 / 2430).